The chain runs to 377 residues: Phospho-N-acetylmuramoyl-pentapeptide-transferase (377 aa).

The next 11 membrane-spanning stretches (helical) occupy residues 9 to 29, 59 to 79, 85 to 105, 122 to 142, 155 to 175, 178 to 198, 210 to 230, 247 to 267, 274 to 294, 299 to 319, and 354 to 374; these read YITL…LVAG, TPTM…LLWA, FVWV…MDDY, FFWQ…AVSA, WVGS…VPFF, VSYP…IVGT, GLAI…AYVV, AAEL…FLWF, VFMG…IAVI, IVLF…MVQV, and QVVV…LSTL.

The protein belongs to the glycosyltransferase 4 family. MraY subfamily. It depends on Mg(2+) as a cofactor.

Its subcellular location is the cell inner membrane. The enzyme catalyses UDP-N-acetyl-alpha-D-muramoyl-L-alanyl-gamma-D-glutamyl-meso-2,6-diaminopimeloyl-D-alanyl-D-alanine + di-trans,octa-cis-undecaprenyl phosphate = di-trans,octa-cis-undecaprenyl diphospho-N-acetyl-alpha-D-muramoyl-L-alanyl-D-glutamyl-meso-2,6-diaminopimeloyl-D-alanyl-D-alanine + UMP. It participates in cell wall biogenesis; peptidoglycan biosynthesis. Functionally, catalyzes the initial step of the lipid cycle reactions in the biosynthesis of the cell wall peptidoglycan: transfers peptidoglycan precursor phospho-MurNAc-pentapeptide from UDP-MurNAc-pentapeptide onto the lipid carrier undecaprenyl phosphate, yielding undecaprenyl-pyrophosphoryl-MurNAc-pentapeptide, known as lipid I. The chain is Phospho-N-acetylmuramoyl-pentapeptide-transferase from Bordetella bronchiseptica (strain ATCC BAA-588 / NCTC 13252 / RB50) (Alcaligenes bronchisepticus).